The sequence spans 314 residues: PDCD10 and GCKIII kinases-associated protein 1 (314 aa).

Ser30 carries the phosphoserine modification. Residues 36 to 142 (DDTDKLKGKW…TQPFLEGGGT (107 aa)) form a disordered region. A Phosphothreonine modification is found at Thr106. Residues 107–116 (PQPTGNSSPT) are compositionally biased toward polar residues. A phosphoserine mark is found at Ser238 and Ser241. The interval 267–291 (VDSGNRQEDTHGSDGDGDGEIVDED) is disordered. Residues 271-280 (NRQEDTHGSD) show a composition bias toward basic and acidic residues. The span at 281–291 (GDGDGEIVDED) shows a compositional bias: acidic residues.

In terms of assembly, interacts with KEAP1; this interaction prevents the ubiquitination of KEAP1 by TRIM25, thus protecting KEAP1 from degradation. Found in association with PDCD10 and members of the STE20 kinases, such as STK24, STK25 and STK26.

Its subcellular location is the cell membrane. Functionally, acts as a tumor suppressor. Acts as a tumor suppressor for colorectal cancer cell proliferation by targeting KEAP1/USP17/ELK1/CDK6 axis. The sequence is that of PDCD10 and GCKIII kinases-associated protein 1 from Homo sapiens (Human).